A 242-amino-acid chain; its full sequence is Sugar fermentation stimulation protein homolog (242 aa).

Belongs to the SfsA family.

This Rippkaea orientalis (strain PCC 8801 / RF-1) (Cyanothece sp. (strain PCC 8801)) protein is Sugar fermentation stimulation protein homolog.